We begin with the raw amino-acid sequence, 414 residues long: MEDDAPVIYGLEFQARALTPQTAETDAIRFLVGTQSLKYDNQIHIIDFDDENNIINKNVLLHQVGEIWHISASPADRGVLATCYNRTFCCVLSLDSFGALGKSSAQLFIALATSSDSKVLTCAAVWRMPKELESGSHESPDDSSSTAQTLELLCHLDNTAHGNMACVVWEPMGDGKKIISLADNHILLWDLQESSSQAVLASSASLEGKGQLKFTSGRWSPHHNCTQVATANDTTLRGWDTRSMSQIYCIENAHGQLVRDLDFNPNKQYYLASCGDDCKVKFWDTRNVTEPVKTLEEHSHWVWNVRYNHSHDQLVLTGSSDSRVILSNMVSISSEPFGHLVDDDDISDQEDHRSEEKSKEPLQDNVIATYEEHEDSVYAVDWSSADPWLFASLSYDGRLVINRVPRALKYHILL.

M1 bears the N-acetylmethionine mark. WD repeat units follow at residues 159 to 199 (TAHG…SQAV), 209 to 249 (KGQL…QIYC), 253 to 293 (AHGQ…EPVK), and 297 to 337 (EHSH…SEPF). Residues 337–362 (FGHLVDDDDISDQEDHRSEEKSKEPL) form a disordered region. The residue at position 347 (S347) is a Phosphoserine. Over residues 349–362 (QEDHRSEEKSKEPL) the composition is skewed to basic and acidic residues. Residues 372–412 (EHEDSVYAVDWSSADPWLFASLSYDGRLVINRVPRALKYHI) form a WD 5 repeat.

It belongs to the WD repeat EIPR1 family. In terms of assembly, interacts with two multisubunit tethering complexes: EARP composed of VPS50, VPS51, VPS52 and VPS53 subunits and GARP complex composed of VPS51, VPS52, VPS53 and VPS54 subunits. Interacts with SNAP29.

It is found in the golgi apparatus. It localises to the trans-Golgi network. Acts as a component of endosomal retrieval machinery that is involved in protein transport from early endosomes to either recycling endosomes or the trans-Golgi network. Mediates the recruitment of Golgi-associated retrograde protein (GARP) complex to the trans-Golgi network and controls early endosome-to-Golgi transport of internalized protein. Promotes the recycling of internalized transferrin receptor (TFRC) to the plasma membrane through interaction with endosome-associated recycling protein (EARP) complex. Controls proper insulin distribution and secretion, and retention of cargo in mature dense core vesicles. Required for the stability of the endosome-associated retrograde protein (EARP) complex subunits and for proper localization and association of EARP with membranes. The polypeptide is EARP and GARP complex-interacting protein 1 (Pongo abelii (Sumatran orangutan)).